The primary structure comprises 564 residues: MFS-type efflux pump LUC4 (564 aa).

Polar residues predominate over residues 1–15 (MGQSQDNTQLTTASP). The tract at residues 1–35 (MGQSQDNTQLTTASPQAEKDLSSNDNPPESEPAAP) is disordered. The next 5 membrane-spanning stretches (helical) occupy residues 42-62 (WLVF…TSII), 78-98 (LYVW…PIFA), 108-128 (SLTL…GGAH), 141-161 (GVGG…MVSV), and 170-190 (IIGG…GAFA). N-linked (GlcNAc...) asparagine glycosylation occurs at Asn-192. Transmembrane regions (helical) follow at residues 197 to 217 (WIFY…IVFL), 236 to 256 (WGGS…LSWG), and 268 to 288 (LVPL…QGAP). Asn-302 carries N-linked (GlcNAc...) asparagine glycosylation. The next 5 membrane-spanning stretches (helical) occupy residues 308 to 328 (LFVI…FLPV), 343 to 363 (VMLF…GIFI), 371 to 391 (VWHF…TLLD), 404 to 424 (LLFG…ILAS), and 436 to 456 (AWTF…AAAF). Asn-461 carries an N-linked (GlcNAc...) asparagine glycan. A helical membrane pass occupies residues 512–532 (KLVWQVSIAFSVLGFVLAFLV).

It belongs to the major facilitator superfamily. TCR/Tet family.

The protein localises to the membrane. Its function is as follows. MFS-type efflux pump; part of the gene cluster that mediates the biosynthesis of the mycotoxin lucilactaene and the lucilactaene-related compound NG-391 that act as cell cycle inhibitors with potent growth inhibitory activity against malarial parasites, moderate growth inhibitory activity against cancer cells, and no activity against bacteria and fungi. The polypeptide is MFS-type efflux pump LUC4 (Fusarium sp).